We begin with the raw amino-acid sequence, 217 residues long: 25 kDa ookinete surface antigen (217 aa).

An N-terminal signal peptide occupies residues 1 to 16 (MNKLYSLFLFLFIQLS). Residues 30 to 59 (CKKGFLIQMSGHLECKCENDLVLVNEETCE) form the EGF-like 1; truncated domain. 3 EGF-like domains span residues 61-106 (KVLK…NVCI), 106-150 (ILNE…NKCS), and 153-193 (GETK…STCT). 9 disulfides stabilise this stretch: C65–C80, C74–C92, C94–C105, C110–C120, C115–C133, C135–C149, C157–C168, C161–C177, and C179–C192. Residue N112 is glycosylated (N-linked (GlcNAc...) asparagine). N-linked (GlcNAc...) asparagine glycosylation is found at N165 and N187. S196 carries GPI-anchor amidated serine lipidation. Residues 197-217 (VYNILNLSLIFVLFSVCFFIM) constitute a propeptide, removed in mature form. N202 carries an N-linked (GlcNAc...) asparagine glycan.

The protein resides in the cell membrane. The polypeptide is 25 kDa ookinete surface antigen (Plasmodium reichenowi).